The primary structure comprises 338 residues: MLAVRSLQHLSTVVLITAYGLVLVWYTVFGASPLHRCIYAVRPTGTNNDTALVWMKMNQTLLFLGAPTHPPNGGWRNHAHISYANLIAGRVVPFQVPPDATNRRIMNVHEAVNCLETLWYTRVRLVVVGWFLYLAFVALHQRRCMFGVVSPAHKMVAPATYLLNYAGRIVSSVFLQYPYTKITRLLCELSVQRQNLVQLFETDPVTFLYHRPAIGVIVGCELIVRFVAVGLIVGTAFISRGACAITYPLFLTITTWCFVSTIGLTELYCILRRGPAPKNADKAAAPGRSKGLSGVCGRCCSIILSGIAMRLCYIAVVAGVVLVALHYEQEIQRRLFDV.

A signal peptide spans 1–30 (MLAVRSLQHLSTVVLITAYGLVLVWYTVFG). Residues 31–121 (ASPLHRCIYA…VNCLETLWYT (91 aa)) lie on the Extracellular side of the membrane. The segment at 31–121 (ASPLHRCIYA…VNCLETLWYT (91 aa)) is involved in fusion. N-linked (GlcNAc...) asparagine; by host glycans are attached at residues Asn48 and Asn58. The helical transmembrane segment at 122-140 (RVRLVVVGWFLYLAFVALH) threads the bilayer. At 141–212 (QRRCMFGVVS…DPVTFLYHRP (72 aa)) the chain is on the cytoplasmic side. A helical membrane pass occupies residues 213–233 (AIGVIVGCELIVRFVAVGLIV). Over 234–243 (GTAFISRGAC) the chain is Extracellular. Residues 244 to 264 (AITYPLFLTITTWCFVSTIGL) traverse the membrane as a helical segment. Residues 265–301 (TELYCILRRGPAPKNADKAAAPGRSKGLSGVCGRCCS) are Cytoplasmic-facing. The segment at 265 to 301 (TELYCILRRGPAPKNADKAAAPGRSKGLSGVCGRCCS) is interaction with UL20. Residues 302–322 (IILSGIAMRLCYIAVVAGVVL) form a helical membrane-spanning segment. The Extracellular segment spans residues 323–338 (VALHYEQEIQRRLFDV).

This sequence belongs to the alphaherpesvirinae glycoprotein K family. In terms of assembly, interacts (via UL20 interaction region) with protein UL20 (via N-terminus); this interaction probably plays a role in the coordinate transport of protein UL20 and gK to the trans-Golgi network (TGN), and is required for the cell surface expression of gK. In terms of processing, N-glycosylated.

The protein resides in the host cell membrane. The protein localises to the host endosome membrane. Its subcellular location is the host Golgi apparatus membrane. In terms of biological role, glycoprotein that probably modulates membrane fusion events during secondary envelopment of cytoplasmic capsids that bud into specific trans-Golgi network (TGN)-derived membranes. Also plays a role, together with gB, in virus-induced cell-to-cell fusion (syncytia formation). Seems to block fusion of virions with infected-cell membranes. The protein is Envelope glycoprotein K (gK) of Homo sapiens (Human).